The following is a 233-amino-acid chain: uncharacterized protein (233 aa).

Residues 21-43 are disordered; it reads RWRTATSADHPRRGRPAAQAVRR.

This is an uncharacterized protein from Mycobacterium tuberculosis (strain CDC 1551 / Oshkosh).